We begin with the raw amino-acid sequence, 884 residues long: Protein translocase subunit SecA (884 aa).

ATP-binding positions include glutamine 82, 100–104 (GEGKT), and aspartate 491.

This sequence belongs to the SecA family.

The protein localises to the plastid. The protein resides in the chloroplast stroma. It is found in the chloroplast thylakoid membrane. The enzyme catalyses ATP + H2O + cellular proteinSide 1 = ADP + phosphate + cellular proteinSide 2.. Its function is as follows. Has a central role in coupling the hydrolysis of ATP to the transfer of proteins across the thylakoid membrane. The chain is Protein translocase subunit SecA from Olisthodiscus luteus (Marine phytoflagellate).